A 282-amino-acid chain; its full sequence is Pantothenate synthetase (282 aa).

30 to 37 (MGALHQGH) provides a ligand contact to ATP. The active-site Proton donor is His-37. A (R)-pantoate-binding site is contributed by Gln-61. Gln-61 serves as a coordination point for beta-alanine. 149–152 (GEKD) is an ATP binding site. Residue Gln-155 coordinates (R)-pantoate. ATP is bound by residues Leu-178 and 186 to 189 (MSSR).

Belongs to the pantothenate synthetase family. As to quaternary structure, homodimer.

It is found in the cytoplasm. It catalyses the reaction (R)-pantoate + beta-alanine + ATP = (R)-pantothenate + AMP + diphosphate + H(+). The protein operates within cofactor biosynthesis; (R)-pantothenate biosynthesis; (R)-pantothenate from (R)-pantoate and beta-alanine: step 1/1. Catalyzes the condensation of pantoate with beta-alanine in an ATP-dependent reaction via a pantoyl-adenylate intermediate. This Flavobacterium psychrophilum (strain ATCC 49511 / DSM 21280 / CIP 103535 / JIP02/86) protein is Pantothenate synthetase.